Consider the following 39-residue polypeptide: IIECVFSCDIEKEGKPCKPKGEKKCSGGWKCKIKLCLKI.

3 disulfides stabilise this stretch: C4/C25, C8/C31, and C17/C36.

Belongs to the neurotoxin 12 (Hwtx-2) family. 06 (TXP1) subfamily. As to expression, expressed by the venom gland.

Its subcellular location is the secreted. Its function is as follows. Inhibits voltage-gated calcium channels (Cav) in rat cerebellar granule cells. Has insecticidal activity. The sequence is that of Omega-theraphotoxin-Bs1b from Brachypelma smithi (Mexican red knee tarantula).